The primary structure comprises 495 residues: UDP-N-acetylmuramoyl-L-alanyl-D-glutamate--2,6-diaminopimelate ligase (495 aa).

UDP-N-acetyl-alpha-D-muramoyl-L-alanyl-D-glutamate is bound at residue serine 29. An ATP-binding site is contributed by 111–117 (GTNGKTS). UDP-N-acetyl-alpha-D-muramoyl-L-alanyl-D-glutamate-binding positions include 153 to 154 (TT), serine 180, glutamine 186, and arginine 188. Residue lysine 220 is modified to N6-carboxylysine. Meso-2,6-diaminopimelate-binding positions include arginine 384, 408 to 411 (DNPR), glycine 459, and glutamate 463. A Meso-diaminopimelate recognition motif motif is present at residues 408 to 411 (DNPR).

The protein belongs to the MurCDEF family. MurE subfamily. Mg(2+) serves as cofactor. In terms of processing, carboxylation is probably crucial for Mg(2+) binding and, consequently, for the gamma-phosphate positioning of ATP.

It is found in the cytoplasm. It carries out the reaction UDP-N-acetyl-alpha-D-muramoyl-L-alanyl-D-glutamate + meso-2,6-diaminopimelate + ATP = UDP-N-acetyl-alpha-D-muramoyl-L-alanyl-gamma-D-glutamyl-meso-2,6-diaminopimelate + ADP + phosphate + H(+). It functions in the pathway cell wall biogenesis; peptidoglycan biosynthesis. Its function is as follows. Catalyzes the addition of meso-diaminopimelic acid to the nucleotide precursor UDP-N-acetylmuramoyl-L-alanyl-D-glutamate (UMAG) in the biosynthesis of bacterial cell-wall peptidoglycan. This chain is UDP-N-acetylmuramoyl-L-alanyl-D-glutamate--2,6-diaminopimelate ligase, found in Xylella fastidiosa (strain Temecula1 / ATCC 700964).